The chain runs to 240 residues: Keratinocyte-associated protein 3 (240 aa).

Helical transmembrane passes span V21–G41, V63–S83, V94–L114, and A163–Y183.

The protein belongs to the TMEM54 family. As to expression, expressed in skin, pancreas and keratinocytes.

It localises to the membrane. The polypeptide is Keratinocyte-associated protein 3 (KRTCAP3) (Homo sapiens (Human)).